A 315-amino-acid polypeptide reads, in one-letter code: Cobalamin biosynthesis protein CobD (315 aa).

5 helical membrane passes run 48 to 70, 75 to 94, 148 to 170, 208 to 230, and 292 to 314; these read IAGI…LSVQ, LHWI…TIAI, LVDG…AMLY, ITSY…SLYI, and LILL…AAYF.

This sequence belongs to the CobD/CbiB family.

The protein localises to the cell membrane. The protein operates within cofactor biosynthesis; adenosylcobalamin biosynthesis. Functionally, converts cobyric acid to cobinamide by the addition of aminopropanol on the F carboxylic group. The polypeptide is Cobalamin biosynthesis protein CobD (Leptospira interrogans serogroup Icterohaemorrhagiae serovar copenhageni (strain Fiocruz L1-130)).